A 182-amino-acid polypeptide reads, in one-letter code: U1 small nuclear ribonucleoprotein C (182 aa).

The Matrin-type zinc-finger motif lies at 4 to 36 (YLCDYCQVWLTHDSQSVRKAHNAGRAHIQNVQD). The disordered stretch occupies residues 129–182 (PQTTASSNTQLTQQQQSLPQTNEHQRARTHSNANNHFTKTHHQGQRSHQRFVRA). Residues 130–150 (QTTASSNTQLTQQQQSLPQTN) show a composition bias toward low complexity. Residues 166–182 (TKTHHQGQRSHQRFVRA) show a composition bias toward basic residues.

This sequence belongs to the U1 small nuclear ribonucleoprotein C family. U1 snRNP is composed of the 7 core Sm proteins smb1, smd1, smd2, smd3, sme1, smf1 and smg1 (Sm proteins B, D1, D2, D3, E, F and G, respectively) that assemble in a heptameric protein ring on the Sm site of the small nuclear RNA to form the core snRNP, and at least 9 U1 snRNP-specific proteins usp101/U1-70K, usp102/U1-A, usp103/U1-C, usp106/LUC7, usp105/PRP39, usp104/PRP40, usp107/U1-H, usp108/U1-J and usp109/U1-L. usp103/U1-C interacts with U1 snRNA and the 5' splice-site region of the pre-mRNA.

The protein resides in the nucleus. Functionally, component of the spliceosomal U1 snRNP, which is essential for recognition of the pre-mRNA 5' splice-site and the subsequent assembly of the spliceosome. usp103/U1-C is directly involved in initial 5' splice-site recognition for both constitutive and regulated alternative splicing. The interaction with the 5' splice-site seems to precede base-pairing between the pre-mRNA and the U1 snRNA. Stimulates commitment or early (E) complex formation by stabilizing the base pairing of the 5' end of the U1 snRNA and the 5' splice-site region. This is U1 small nuclear ribonucleoprotein C (usp103) from Schizosaccharomyces pombe (strain 972 / ATCC 24843) (Fission yeast).